A 532-amino-acid chain; its full sequence is Bifunctional purine biosynthesis protein PurH (532 aa).

Positions 1–147 (MAKIKRALIS…KNYRSVTVVT (147 aa)) constitute an MGS-like domain.

Belongs to the PurH family.

The enzyme catalyses (6R)-10-formyltetrahydrofolate + 5-amino-1-(5-phospho-beta-D-ribosyl)imidazole-4-carboxamide = 5-formamido-1-(5-phospho-D-ribosyl)imidazole-4-carboxamide + (6S)-5,6,7,8-tetrahydrofolate. It carries out the reaction IMP + H2O = 5-formamido-1-(5-phospho-D-ribosyl)imidazole-4-carboxamide. The protein operates within purine metabolism; IMP biosynthesis via de novo pathway; 5-formamido-1-(5-phospho-D-ribosyl)imidazole-4-carboxamide from 5-amino-1-(5-phospho-D-ribosyl)imidazole-4-carboxamide (10-formyl THF route): step 1/1. It functions in the pathway purine metabolism; IMP biosynthesis via de novo pathway; IMP from 5-formamido-1-(5-phospho-D-ribosyl)imidazole-4-carboxamide: step 1/1. In Magnetococcus marinus (strain ATCC BAA-1437 / JCM 17883 / MC-1), this protein is Bifunctional purine biosynthesis protein PurH.